We begin with the raw amino-acid sequence, 283 residues long: Pseudokinase OPG198 (283 aa).

Residues M1 and K30 each coordinate ATP. The Protein kinase domain occupies 1–283; that stretch reads MESFKYCFDN…DRLRKLFIQD (283 aa).

This sequence belongs to the protein kinase superfamily. Ser/Thr protein kinase family. Poxviruses subfamily. In terms of assembly, interacts with B1/VPK1. Interacts with host VRK1. Interacts with host VRK2.

The protein resides in the host nucleus. Its activity is regulated as follows. Both catalytically active kinases B1/VPK1 and host VRK2 repress B12 inhibitory activity in a B1/VPK1 deletion mutant strain. Pseudokinase that plays a role in viral DNA replication repression by activating the antiviral protein BANF1 and inhibiting the activity of host VRK1, a cellular modulator of BANF1. The protein is Pseudokinase OPG198 (OPG198) of Vaccinia virus (strain Western Reserve) (VACV).